The primary structure comprises 262 residues: Hydroxyethylthiazole kinase (262 aa).

Residue Met43 coordinates substrate. ATP contacts are provided by Arg118 and Thr164. Ala191 lines the substrate pocket.

This sequence belongs to the Thz kinase family. It depends on Mg(2+) as a cofactor.

It carries out the reaction 5-(2-hydroxyethyl)-4-methylthiazole + ATP = 4-methyl-5-(2-phosphooxyethyl)-thiazole + ADP + H(+). It functions in the pathway cofactor biosynthesis; thiamine diphosphate biosynthesis; 4-methyl-5-(2-phosphoethyl)-thiazole from 5-(2-hydroxyethyl)-4-methylthiazole: step 1/1. Its function is as follows. Catalyzes the phosphorylation of the hydroxyl group of 4-methyl-5-beta-hydroxyethylthiazole (THZ). The sequence is that of Hydroxyethylthiazole kinase from Cereibacter sphaeroides (strain KD131 / KCTC 12085) (Rhodobacter sphaeroides).